Here is a 255-residue protein sequence, read N- to C-terminus: Probable membrane transporter protein HI_0198 (255 aa).

8 helical membrane passes run 7–27 (LLAI…IAGG), 28–48 (GGLI…MALG), 76–96 (IWFI…LIQS), 99–119 (VAIF…YFLF), 132–152 (LSYL…DGFF), 153–173 (GPGT…FNLP), 191–211 (FALF…MMAG), and 235–255 (VVIM…WFHF).

This sequence belongs to the 4-toluene sulfonate uptake permease (TSUP) (TC 2.A.102) family.

Its subcellular location is the cell membrane. This chain is Probable membrane transporter protein HI_0198, found in Haemophilus influenzae (strain ATCC 51907 / DSM 11121 / KW20 / Rd).